A 400-amino-acid chain; its full sequence is MSETVQKQGRVVEIDSHAINFGPQHPAAHGVLRLVLELDGEVVERADPHIGLLHRGTEKLIEYKSYLQALPYFDRLDYVSPMCEEHAFALATEKLLGITAPERAQWIRTMFAEITRILNHLLNLTTYALDGGAMTPVLWGHEEREKLLEFHEAVSGARFHANYFRPGGVAKDLPAGLTDRIADWTEKFPAFIDDMAGLLSDNRIWKQRVVDIGRMTPEQALAWGFSGPCIRASGIPWDLRKSQPYDKYADVDFEVPVGRNGDCYDRYLVRVEEMRQSVRIVKQCLGKIRPGPIKVQDHKITPPPRAEMKRSMEALIHHFKLYTEGYHVPEGATYTAVESPKGEFGVYLVSDGSNRPYRCKIRPTGFAHLQAIDVMAHRHMLADAVVIIGSLDLVFGEVDR.

Belongs to the complex I 49 kDa subunit family. In terms of assembly, NDH-1 is composed of 14 different subunits. Subunits NuoB, C, D, E, F, and G constitute the peripheral sector of the complex.

It localises to the cell inner membrane. The catalysed reaction is a quinone + NADH + 5 H(+)(in) = a quinol + NAD(+) + 4 H(+)(out). NDH-1 shuttles electrons from NADH, via FMN and iron-sulfur (Fe-S) centers, to quinones in the respiratory chain. The immediate electron acceptor for the enzyme in this species is believed to be ubiquinone. Couples the redox reaction to proton translocation (for every two electrons transferred, four hydrogen ions are translocated across the cytoplasmic membrane), and thus conserves the redox energy in a proton gradient. The sequence is that of NADH-quinone oxidoreductase subunit D from Granulibacter bethesdensis (strain ATCC BAA-1260 / CGDNIH1).